Here is a 69-residue protein sequence, read N- to C-terminus: Alpha-conotoxin-like Tx1 (69 aa).

The signal sequence occupies residues 1 to 21 (MGMRMMFVVFLLVVLASTVVS). The propeptide occupies 22 to 49 (STSGRRAFHGRNAAAKASGLVSLTDRRP). Intrachain disulfides connect Cys-51–Cys-57 and Cys-52–Cys-65. The tract at residues 53-55 (SDP) is ser-Xaa-Pro motif, crucial for potent interaction with nAChR. Gly-66 is modified (glycine amide).

This sequence belongs to the conotoxin A superfamily. Expressed by the venom duct.

It is found in the secreted. Functionally, alpha-conotoxins act on postsynaptic membranes, they bind to the nicotinic acetylcholine receptors (nAChR) and thus inhibit them. In Conus textile (Cloth-of-gold cone), this protein is Alpha-conotoxin-like Tx1.